A 1182-amino-acid chain; its full sequence is MVRPLSLGELPPSYTPPARSSAPHILAGSLQAPLWLRAYFQGLLFSLGCRIQKHCGKVLFLGLVAFGALALGLRVAVIETDLEQLWVEVGSRVSQELHYTKEKLGEEAAYTSQMLIQTAHQEGGNVLTPEALDLHLQAALTASKVQVSLYGKSWDLNKICYKSGVPLIENGMIERMIEKLFPCVILTPLDCFWEGAKLQGGSAYLPGRPDIQWTNLDPQQLLEELGPFASLEGFRELLDKAQVGQAYVGRPCLDPDDPHCPPSAPNRHSRQAPNVAQELSGGCHGFSHKFMHWQEELLLGGTARDLQGQLLRAEALQSTFLLMSPRQLYEHFRGDYQTHDIGWSEEQASMVLQAWQRRFVQLAQEALPANASQQIHAFSSTTLDDILRAFSEVSTTRVVGGYLLMLAYACVTMLRWDCAQSQGAVGLAGVLLVALAVASGLGLCALLGITFNAATTQVLPFLALGIGVDDIFLLAHAFTKAPPDTPLPERMGECLRSTGTSVALTSVNNMVAFFMAALVPIPALRAFSLQAAIVVGCNFAAVMLVFPAILSLDLRRRHRQRLDVLCCFSSPCSAQVIQMLPQELGDRAVPVGIAHLTATVQAFTHCEASSQHVVTILPPQAHLLSPASDPLGSELYSPGGSTRDLLSQEEGTGPQAACRPLLCAHWTLAHFARYQFAPLLLQTRAKALVLLFFGALLGLSLYGATLVQDGLALTDVVPRGTKEHAFLSAQLRYFSLYEVALVTQGGFDYAHSQRALFDLHQRFSSLKAVLPPPATQAPRTWLHYYRSWLQGIQAAFDQDWASGRITCHSYRNGSEDGALAYKLLIQTGNAQEPLDFSQLTTRKLVDKEGLIPPELFYMGLTVWVSSDPLGLAASQANFYPPPPEWLHDKYDTTGENLRIPAAQPLEFAQFPFLLHGLQKTADFVEAIEGARAACTEAGQAGVHAYPSGSPFLFWEQYLGLRRCFLLAVCILLVCTFLVCALLLLSPWTAGLIVLVLAMMTVELFGIMGFLGIKLSAIPVVILVASIGIGVEFTVHVALGFLTSHGSRNLRAASALEQTFAPVTDGAVSTLLGLLMLAGSNFDFIIRYFFVVLTVLTLLGLLHGLLLLPVLLSILGPPPQVVQVYKESPQTLNSAAPQRGGLRWDRPPTLPQSFARVTTSMTVALHPPPLPGAYVHPASEEPT.

Topologically, residues 1–57 (MVRPLSLGELPPSYTPPARSSAPHILAGSLQAPLWLRAYFQGLLFSLGCRIQKHCGK) are cytoplasmic. Residues 58-78 (VLFLGLVAFGALALGLRVAVI) form a helical membrane-spanning segment. Residues 79-394 (ETDLEQLWVE…DILRAFSEVS (316 aa)) are Extracellular-facing. A glycan (N-linked (GlcNAc...) asparagine) is linked at asparagine 370. The 159-residue stretch at 394-552 (STTRVVGGYL…MLVFPAILSL (159 aa)) folds into the SSD domain. The chain crosses the membrane as a helical span at residues 395-414 (TTRVVGGYLLMLAYACVTML). Topologically, residues 415-428 (RWDCAQSQGAVGLA) are cytoplasmic. A helical membrane pass occupies residues 429–449 (GVLLVALAVASGLGLCALLGI). Residues 450 to 457 (TFNAATTQ) are Extracellular-facing. Residues 458-478 (VLPFLALGIGVDDIFLLAHAF) traverse the membrane as a helical segment. Residues 479-501 (TKAPPDTPLPERMGECLRSTGTS) lie on the Cytoplasmic side of the membrane. Residues 502–522 (VALTSVNNMVAFFMAALVPIP) traverse the membrane as a helical segment. The Extracellular portion of the chain corresponds to 523-531 (ALRAFSLQA). Residues 532–552 (AIVVGCNFAAVMLVFPAILSL) form a helical membrane-spanning segment. Topologically, residues 553–686 (DLRRRHRQRL…APLLLQTRAK (134 aa)) are cytoplasmic. The helical transmembrane segment at 687–707 (ALVLLFFGALLGLSLYGATLV) threads the bilayer. At 708–963 (QDGLALTDVV…WEQYLGLRRC (256 aa)) the chain is on the extracellular side. An N-linked (GlcNAc...) asparagine glycan is attached at asparagine 812. Residues 964–984 (FLLAVCILLVCTFLVCALLLL) form a helical membrane-spanning segment. At 985–991 (SPWTAGL) the chain is on the cytoplasmic side. Residues 992–1012 (IVLVLAMMTVELFGIMGFLGI) traverse the membrane as a helical segment. Lysine 1013 is a topological domain (extracellular). A helical transmembrane segment spans residues 1014 to 1034 (LSAIPVVILVASIGIGVEFTV). Residues 1035–1064 (HVALGFLTSHGSRNLRAASALEQTFAPVTD) are Cytoplasmic-facing. Residues 1065 to 1085 (GAVSTLLGLLMLAGSNFDFII) traverse the membrane as a helical segment. Arginine 1086 is a topological domain (extracellular). The chain crosses the membrane as a helical span at residues 1087 to 1107 (YFFVVLTVLTLLGLLHGLLLL). Residues 1108-1182 (PVLLSILGPP…YVHPASEEPT (75 aa)) are Cytoplasmic-facing.

It belongs to the patched family. As to expression, expressed in epithelial cells of the developing hair, tooth and whisker.

The protein resides in the membrane. Its function is as follows. Plays a role in the control of cellular growth. May have a role in epidermal development. May act as a receptor for Sonic hedgehog (SHH). This Mus musculus (Mouse) protein is Protein patched homolog 2 (Ptch2).